We begin with the raw amino-acid sequence, 426 residues long: MSKSENLYHAARELIPGGVNSPVRAFTGVGGTPLFIERADGAYLYDVDGKAYIDYVGSWGPMVLGHNHPAIRNAVIEAASRGLSFGAPTEMEVKMAALVTELVPTMDMVRMVNSGTEATMSAIRLARGFTGRDKIIKFEGCYHGHADCLLVKAGSGALTLGQPNSPGVPADFAKHTLTCTYNDLASVRAAFEQYPQEIACIIVEPVAGNMNCIPPQPEFLPGLRALCDEFGALLIIDEVMTGFRVALAGAQAYYGVEPDLTCLGKIIGGGMPVGAFGGRREVMDALAPTGPVYQAGTLSGNPIAMAAGFACLNEVAQPGVHETLTELTNQLAQGLLDAARDAGIPLVVNNVGGMFGIFFTDAETVTCYQDVVKCDVERFKRFFHLMLEEGVYLAPSAFEAGFMSVAHSEEDIDNTIDAARRVFAKL.

Lys265 is modified (N6-(pyridoxal phosphate)lysine).

This sequence belongs to the class-III pyridoxal-phosphate-dependent aminotransferase family. HemL subfamily. As to quaternary structure, homodimer. It depends on pyridoxal 5'-phosphate as a cofactor.

The protein resides in the cytoplasm. The enzyme catalyses (S)-4-amino-5-oxopentanoate = 5-aminolevulinate. Its pathway is porphyrin-containing compound metabolism; protoporphyrin-IX biosynthesis; 5-aminolevulinate from L-glutamyl-tRNA(Glu): step 2/2. This chain is Glutamate-1-semialdehyde 2,1-aminomutase, found in Klebsiella pneumoniae subsp. pneumoniae (strain ATCC 700721 / MGH 78578).